Consider the following 175-residue polypeptide: Alpha-crystallin B chain (175 aa).

Position 1 is an N-acetylmethionine (M1). A Phosphoserine modification is found at S19. O-linked (GlcNAc) serine glycosylation is present at S41. S45 and S59 each carry phosphoserine. The 109-residue stretch at 56-164 (RAPSWFDTGL…PERTIPITRE (109 aa)) folds into the sHSP domain. H83 contributes to the Zn(2+) binding site. K92 bears the N6-acetyllysine; partial mark. H104, E106, H111, and H119 together coordinate Zn(2+). A disordered region spans residues 146–175 (NGPRKQVSGPERTIPITREEKPAVTAAPKK). N6-acetyllysine is present on K166. T170 carries an O-linked (GlcNAc) threonine glycan.

Belongs to the small heat shock protein (HSP20) family. Heteromer composed of three CRYAA and one CRYAB subunits. Aggregates with homologous proteins, including the small heat shock protein HSPB1, to form large heteromeric complexes. Inter-subunit bridging via zinc ions enhances stability, which is crucial as there is no protein turn over in the lens. Interacts with HSPBAP1 and TTN/titin. Interacts with TMEM109; in the cellular response to DNA damage. Interacts with DES; binds rapidly during early stages of DES filament assembly and a reduced binding seen in the later stages. Interacts with TMED10; the interaction mediates the translocation from the cytoplasm into the ERGIC (endoplasmic reticulum-Golgi intermediate compartment) and thereby secretion. Interacts with ATP6V1A and with MTOR, forming a ternary complex. As to expression, lens as well as other tissues. Expressed in myocardial tissue.

The protein localises to the cytoplasm. The protein resides in the nucleus. It localises to the secreted. It is found in the lysosome. Its function is as follows. May contribute to the transparency and refractive index of the lens. Has chaperone-like activity, preventing aggregation of various proteins under a wide range of stress conditions. In lens epithelial cells, stabilizes the ATP6V1A protein, preventing its degradation by the proteasome. This chain is Alpha-crystallin B chain, found in Homo sapiens (Human).